The primary structure comprises 637 residues: Early transcription factor 70 kDa subunit (637 aa).

The region spanning 32–185 (RTIIDENRSV…GHIIDLMSEE (154 aa)) is the Helicase ATP-binding domain. 45–52 (HIMGSGKT) lines the ATP pocket. A DEXH box motif is present at residues 135–138 (DKAH). Positions 327-507 (KFKYFINRIQ…VLPFDIKKLL (181 aa)) constitute a Helicase C-terminal domain.

Belongs to the helicase family. VETF subfamily. As to quaternary structure, heterodimer of a 70 kDa and a 82 kDa subunit. Part of the early transcription complex composed of ETF, RAP94/OPG109, and the DNA-directed RNA polymerase.

It localises to the virion. Its function is as follows. Acts with RNA polymerase to initiate transcription from early gene promoters. Is recruited by the RPO-associated protein of 94 kDa RAP94/OPG109 to form the early transcription complex, which also contains the core RNA polymerase. ETF heterodimer binds to early gene promoters. The polypeptide is Early transcription factor 70 kDa subunit (OPG118) (Homo sapiens (Human)).